A 432-amino-acid polypeptide reads, in one-letter code: UDP-N-acetylmuramate--L-alanine ligase (432 aa).

108 to 114 (GAHGKTS) is a binding site for ATP.

This sequence belongs to the MurCDEF family.

It localises to the cytoplasm. It carries out the reaction UDP-N-acetyl-alpha-D-muramate + L-alanine + ATP = UDP-N-acetyl-alpha-D-muramoyl-L-alanine + ADP + phosphate + H(+). Its pathway is cell wall biogenesis; peptidoglycan biosynthesis. Cell wall formation. The sequence is that of UDP-N-acetylmuramate--L-alanine ligase from Bacillus pumilus (strain SAFR-032).